A 623-amino-acid chain; its full sequence is Sterol O-acyltransferase 1 (623 aa).

The disordered stretch occupies residues 20-99 (NSAEPSKRHS…EQAEEKYPVD (80 aa)). Low complexity predominate over residues 57 to 72 (ATTTATGVAVAAAAAA). Acidic residues predominate over residues 83–92 (DGDDEQDEQA). Transmembrane regions (helical) follow at residues 195–215 (LESN…WIAF), 242–262 (LFTI…VVFV), 277–297 (GFVA…PVYV), 384–404 (ISCS…QINY), and 422–442 (IMGT…PVAM). The short motif at 504-510 (FYGDWWN) is the FYXDWWN motif element. 2 helical membrane-spanning segments follow: residues 548 to 568 (ATLF…FAIF) and 603 to 623 (VVFT…YLTL). The active site involves histidine 560.

The protein belongs to the membrane-bound acyltransferase family. Sterol o-acyltransferase subfamily.

It localises to the endoplasmic reticulum membrane. Its function is as follows. Sterol O-acyltransferase that catalyzes the formation of stery esters. This is Sterol O-acyltransferase 1 (ARE1) from Saccharomyces uvarum (strain ATCC 76518 / CBS 7001 / CLIB 283 / NBRC 10550 / MCYC 623 / NCYC 2669 / NRRL Y-11845) (Yeast).